A 139-amino-acid chain; its full sequence is Ribulose bisphosphate carboxylase small subunit (139 aa).

The protein belongs to the RuBisCO small chain family. As to quaternary structure, heterohexadecamer of 8 large and 8 small subunits.

The protein resides in the plastid. Its subcellular location is the chloroplast. RuBisCO catalyzes two reactions: the carboxylation of D-ribulose 1,5-bisphosphate, the primary event in carbon dioxide fixation, as well as the oxidative fragmentation of the pentose substrate in the photorespiration process. Both reactions occur simultaneously and in competition at the same active site. Although the small subunit is not catalytic it is essential for maximal activity. The polypeptide is Ribulose bisphosphate carboxylase small subunit (Chrysotila carterae (Marine alga)).